The sequence spans 77 residues: Large ribosomal subunit protein bL28 (77 aa).

The protein belongs to the bacterial ribosomal protein bL28 family.

This Karelsulcia muelleri (strain GWSS) (Sulcia muelleri) protein is Large ribosomal subunit protein bL28.